Reading from the N-terminus, the 1186-residue chain is MSLKFILGTASYDHHQALVTNLKATFQEKPQERYFYLVPNHIKFESEVSILEALKSDENDYVAASQIQVFSLTRLAWYFMKNTPYYQIPRISTAGLNMLVFRLLQEHQEQLQLFRGEVRHTGFVAQLTKQLLELKIGCITPADLTAMAENLGDQQVELAKKLHDLTIIATAFEAAMQKRFIENTALIDALTLFLQQQTLTDCHFYVEGFAQFTAQEQALLTTLMQQSEVQIGFILDRAYPNQQPDGLNFFFQAGRTYYNLYQQARLNHVPVMMDQMADSQRLTPALAALDQFWVSSESPGNRKLSPVPVADHLHVVAAENRYAELRYVAREIRRLVQTGHYRYRDFLILTRHLAPYQTMIAPILTEYEIPYFCDLPQTMAAHPLVSLLEKLLDVNLHFYRYEDVMALLKTELLIPKGMSIAEFRADLDLCENLILKNGYEGKDWLNDFDWQFYRFGSYQEGTRTTQDEALTERINGIRRYVQATLPPFYRALKAAKTGRQVVQVLYQFLIDHGVDRQLLHWRDQALAANQVAQAGQPEQTWSTFMQMLDEYVTLLGDVSFEEDNTEQLNEFKQLLSAGFAAAQYAQIPSTLDQVVLSESGMVQTKKRQITFMIGSTDQVMPDQIENTALLTDQDRQRLLDNEGQVTPLLNESSVGKMNAEPYLNYLAFLSSQTTVYFTYPLGNGEGTAFKISPYVERIRNHFDLTIQKIAAEQSLQSTETPQGSWRSLLSDLIQVSRQAQENQTLIPEQWLTTYRLLQQAPQSQFLTTQLFQSLNYRNEPERLTPEIVTGLYGNEIHTSISKLEEFYQNQYAYFLKYGLKLQERPVFELTPANTGNFYHEVMDRFIKLIQGQQIALPELDDQQIDKLVSEVLAKTYEQPEFKILNKTARMGYIRQQLMQTVKRVSLALRNQSLSTNLRPLATEVLFGQVGAEKGLQGLNFMLDDHREVKVRGKIDRIDQLTINNQPYLGIVDYKSSQHSFNFRDAYYGLALQMLTYLETVLQDQQAILPANSAVKPAGAFYLHLKNPTLTLKQLTKKKMGQLQKGEFDQMLLDQFKYNGLIVNDEELLENLDTTLVNGQSPLFAFSKLKSGKFSSKQLVTLNQLDLLMAHNEDLIKEAGQAIFAGDTALNPIMRPDRTNALTLSPFKSIFQFDAMLPENNYRQLEALDEKAVLERLMSKKGDGNLE.

The protein belongs to the helicase family. AddB/RexB type 2 subfamily. Heterodimer of AddA and RexB. Mg(2+) serves as cofactor.

Its function is as follows. The heterodimer acts as both an ATP-dependent DNA helicase and an ATP-dependent, dual-direction single-stranded exonuclease. Recognizes the chi site generating a DNA molecule suitable for the initiation of homologous recombination. This subunit has 5' -&gt; 3' nuclease activity but not helicase activity. The sequence is that of ATP-dependent helicase/deoxyribonuclease subunit B from Latilactobacillus sakei subsp. sakei (strain 23K) (Lactobacillus sakei subsp. sakei).